We begin with the raw amino-acid sequence, 286 residues long: ATP phosphoribosyltransferase (286 aa).

Belongs to the ATP phosphoribosyltransferase family. Long subfamily. It depends on Mg(2+) as a cofactor.

Its subcellular location is the cytoplasm. It catalyses the reaction 1-(5-phospho-beta-D-ribosyl)-ATP + diphosphate = 5-phospho-alpha-D-ribose 1-diphosphate + ATP. It participates in amino-acid biosynthesis; L-histidine biosynthesis; L-histidine from 5-phospho-alpha-D-ribose 1-diphosphate: step 1/9. Feedback inhibited by histidine. Catalyzes the condensation of ATP and 5-phosphoribose 1-diphosphate to form N'-(5'-phosphoribosyl)-ATP (PR-ATP). Has a crucial role in the pathway because the rate of histidine biosynthesis seems to be controlled primarily by regulation of HisG enzymatic activity. The chain is ATP phosphoribosyltransferase from Arthrobacter sp. (strain FB24).